Reading from the N-terminus, the 324-residue chain is Annexin A3 (324 aa).

Annexin repeat units follow at residues 19–90 (FNPS…ALIT), 91–162 (APAV…TLAD), 174–246 (HLAK…AVVR), and 250–321 (NTPA…KICG). Lys-178 is subject to N6-acetyllysine. At Thr-268 the chain carries Phosphothreonine.

It belongs to the annexin family.

Its function is as follows. Inhibitor of phospholipase A2, also possesses anti-coagulant properties. This is Annexin A3 (Anxa3) from Rattus norvegicus (Rat).